The sequence spans 688 residues: Bifunctional protein GAL10 (688 aa).

The interval 1–346 (MSEDKYCLVT…TQDNPFGYQI (346 aa)) is galactowaldenase. Residue 6 to 37 (YCLVTGGAGYIGSHTVVELCEAGYKCIVVDNL) coordinates NAD(+). The segment at 347–688 (KGVDSKFFGD…HKLSYTFRTL (342 aa)) is mutarotase. Residue histidine 525 is the For mutarotase activity of the active site.

It in the N-terminal section; belongs to the NAD(P)-dependent epimerase/dehydratase family. The protein in the C-terminal section; belongs to the aldose epimerase family. Requires NAD(+) as cofactor.

The enzyme catalyses UDP-alpha-D-glucose = UDP-alpha-D-galactose. It carries out the reaction alpha-D-glucose = beta-D-glucose. It functions in the pathway carbohydrate metabolism; galactose metabolism. It participates in carbohydrate metabolism; hexose metabolism. In terms of biological role, mutarotase converts alpha-aldose to the beta-anomer. It is active on D-glucose, L-arabinose, D-xylose, D-galactose, maltose and lactose. The sequence is that of Bifunctional protein GAL10 (GAL10) from Kluyveromyces lactis (strain ATCC 8585 / CBS 2359 / DSM 70799 / NBRC 1267 / NRRL Y-1140 / WM37) (Yeast).